The following is a 101-amino-acid chain: Small ribosomal subunit protein uS14 (101 aa).

This sequence belongs to the universal ribosomal protein uS14 family. As to quaternary structure, part of the 30S ribosomal subunit. Contacts proteins S3 and S10.

Functionally, binds 16S rRNA, required for the assembly of 30S particles and may also be responsible for determining the conformation of the 16S rRNA at the A site. This chain is Small ribosomal subunit protein uS14, found in Anaplasma phagocytophilum (strain HZ).